Consider the following 175-residue polypeptide: NADH-quinone oxidoreductase subunit I (175 aa).

4Fe-4S ferredoxin-type domains are found at residues 69–98 (KRDEQGRERCTSCFCCMWICPADAIYIEAA) and 115–144 (KKFEIDLLRCIFCGMCEEACPKGAIYLDGP). 8 residues coordinate [4Fe-4S] cluster: Cys-78, Cys-81, Cys-84, Cys-88, Cys-124, Cys-127, Cys-130, and Cys-134.

This sequence belongs to the complex I 23 kDa subunit family. In terms of assembly, NDH-1 is composed of 14 different subunits. Subunits NuoA, H, J, K, L, M, N constitute the membrane sector of the complex. [4Fe-4S] cluster serves as cofactor.

The protein localises to the cell inner membrane. The catalysed reaction is a quinone + NADH + 5 H(+)(in) = a quinol + NAD(+) + 4 H(+)(out). In terms of biological role, NDH-1 shuttles electrons from NADH, via FMN and iron-sulfur (Fe-S) centers, to quinones in the respiratory chain. The immediate electron acceptor for the enzyme in this species is believed to be ubiquinone. Couples the redox reaction to proton translocation (for every two electrons transferred, four hydrogen ions are translocated across the cytoplasmic membrane), and thus conserves the redox energy in a proton gradient. The chain is NADH-quinone oxidoreductase subunit I from Leptospira interrogans serogroup Icterohaemorrhagiae serovar Lai (strain 56601).